Here is a 524-residue protein sequence, read N- to C-terminus: Beta-glucosidase 23 (524 aa).

The signal sequence occupies residues Met-1–Ala-24. Gln-54 is an a beta-D-glucoside binding site. N-linked (GlcNAc...) asparagine glycosylation is present at Asn-60. A beta-D-glucoside contacts are provided by residues His-157 and Asn-202 to Glu-203. Glu-203 functions as the Proton donor in the catalytic mechanism. A disulfide bridge connects residues Cys-222 and Cys-230. Tyr-346 and Glu-418 together coordinate a beta-D-glucoside. Residue Glu-418 is the Nucleophile of the active site. N-linked (GlcNAc...) asparagine glycosylation occurs at Asn-461. A beta-D-glucoside contacts are provided by residues Trp-468, Glu-475–Trp-476, and Phe-484. Asn-494 carries N-linked (GlcNAc...) asparagine glycosylation. The Prevents secretion from ER motif lies at Lys-521 to Leu-524.

This sequence belongs to the glycosyl hydrolase 1 family. As to quaternary structure, homodimers. Binds to the deubiquitinating enzyme AMSH3. The inactive form interacts with PBP1/JAL30 to form the PYK10 complex, at least composed of PYK10/BGLU23, BGLU21, BGLU22, JAL22, JAL23, PBP1/JAL30, PBP2/JAL31, JAL32, JAL33, JAL34, JAL35, GLL22 and GLL23. Post-translationally, forms interchain disulfide bonds. As to expression, expressed exclusively in roots.

It is found in the endoplasmic reticulum lumen. It catalyses the reaction Hydrolysis of terminal, non-reducing beta-D-glucosyl residues with release of beta-D-glucose.. Its activity is regulated as follows. Activated by tissue damage and upon binding to PBP1 or PBP2. Its function is as follows. Beta-D-glucosidase active on scopolin &gt; esculin &gt;&gt; 4-MU-glucoside &gt;&gt; DIMBOA-glucoside. No activity with pNP-glucoside, oNP-glucoside and sinigrin as substrates. May possess beta-D-fucosidase activity. Required for the beneficial interaction with the endophytic fungus P.indica. May participate in the control of root colonization by P.indica by repressing defense responses and modulating other responses required for a mutualistic interaction. This is Beta-glucosidase 23 from Arabidopsis thaliana (Mouse-ear cress).